A 241-amino-acid chain; its full sequence is Phosphoadenosine 5'-phosphosulfate reductase (241 aa).

Cys235 acts as the Nucleophile; cysteine thiosulfonate intermediate in catalysis.

The protein belongs to the PAPS reductase family. CysH subfamily.

The protein localises to the cytoplasm. The catalysed reaction is [thioredoxin]-disulfide + sulfite + adenosine 3',5'-bisphosphate + 2 H(+) = [thioredoxin]-dithiol + 3'-phosphoadenylyl sulfate. It functions in the pathway sulfur metabolism; hydrogen sulfide biosynthesis; sulfite from sulfate: step 3/3. Catalyzes the formation of sulfite from phosphoadenosine 5'-phosphosulfate (PAPS) using thioredoxin as an electron donor. This is Phosphoadenosine 5'-phosphosulfate reductase from Xanthomonas axonopodis pv. citri (strain 306).